A 181-amino-acid polypeptide reads, in one-letter code: Insulin-like growth factor 2 (181 aa).

A signal peptide spans 1 to 24 (MGIPMRKPLLVLLVFLALASCCYA). The segment at 25-52 (AYRPSETLCGGELVDTLQFVCGDRGFYF) is b. Intrachain disulfides connect Cys-33–Cys-71, Cys-45–Cys-84, and Cys-70–Cys-75. Positions 53–64 (SRPASRVNRRSR) are c. The segment at 65 to 85 (GIVEECCFRSCDLALLETYCA) is a. The segment at 86-91 (TPAKSE) is d. Residues 92-181 (RDVSTPPTVL…ASPEASGHRK (90 aa)) constitute a propeptide, e peptide. Positions 151 to 181 (EAKRHRPLTARPTRDPAAHGGASPEASGHRK) are disordered. Residue Thr-163 is glycosylated (O-linked (GalNAc...) threonine).

This sequence belongs to the insulin family. As to quaternary structure, interacts with MYORG; this interaction is required for IGF2 secretion. Interacts with integrins ITGAV:ITGB3 and ITGA6:ITGB4; integrin-binding is required for IGF2 signaling. Interacts with IGFBP2. In terms of processing, proteolytically processed by PCSK4, proIGF2 is cleaved at Arg-128 and Arg-92 to generate big-IGF2 and mature IGF2.

Its subcellular location is the secreted. Functionally, the insulin-like growth factors possess growth-promoting activity. Major fetal growth hormone in mammals. Plays a key role in regulating fetoplacental development. IGF2 is influenced by placental lactogen. Also involved in tissue differentiation. In adults, involved in glucose metabolism in adipose tissue, skeletal muscle and liver. Acts as a ligand for integrin which is required for IGF2 signaling. Positively regulates myogenic transcription factor MYOD1 function by facilitating the recruitment of transcriptional coactivators, thereby controlling muscle terminal differentiation. Inhibits myoblast differentiation and modulates metabolism via increasing the mitochondrial respiration rate. Preptin undergoes glucose-mediated co-secretion with insulin, and acts as a physiological amplifier of glucose-mediated insulin secretion. Exhibits osteogenic properties by increasing osteoblast mitogenic activity through phosphoactivation of MAPK1 and MAPK3. In Sus scrofa (Pig), this protein is Insulin-like growth factor 2.